The following is a 162-amino-acid chain: Cyclic pyranopterin monophosphate synthase (162 aa).

Substrate is bound by residues 75–77 (LCH) and 113–114 (ME). D128 is a catalytic residue.

The protein belongs to the MoaC family. Homohexamer; trimer of dimers.

It catalyses the reaction (8S)-3',8-cyclo-7,8-dihydroguanosine 5'-triphosphate = cyclic pyranopterin phosphate + diphosphate. It functions in the pathway cofactor biosynthesis; molybdopterin biosynthesis. Functionally, catalyzes the conversion of (8S)-3',8-cyclo-7,8-dihydroguanosine 5'-triphosphate to cyclic pyranopterin monophosphate (cPMP). The sequence is that of Cyclic pyranopterin monophosphate synthase from Burkholderia ambifaria (strain ATCC BAA-244 / DSM 16087 / CCUG 44356 / LMG 19182 / AMMD) (Burkholderia cepacia (strain AMMD)).